Here is a 466-residue protein sequence, read N- to C-terminus: mRNA-capping enzyme subunit alpha (466 aa).

The active-site N6-GMP-lysine intermediate is the K67. The interval 408–466 (REQGLKNAQKQFNHQASARSSLSQQHSTEPEQSQDQPKYVDDDDDNWSDDEPDTKRQKI) is disordered. Residues 413-443 (KNAQKQFNHQASARSSLSQQHSTEPEQSQDQ) are compositionally biased toward polar residues. Acidic residues predominate over residues 448 to 459 (DDDDDNWSDDEP).

The protein belongs to the eukaryotic GTase family. As to quaternary structure, heterodimer. The mRNA-capping enzyme is composed of two separate chains alpha and beta, respectively a mRNA guanylyltransferase and an mRNA 5'-triphosphate monophosphatase.

The protein localises to the nucleus. It catalyses the reaction a 5'-end diphospho-ribonucleoside in mRNA + GTP + H(+) = a 5'-end (5'-triphosphoguanosine)-ribonucleoside in mRNA + diphosphate. In terms of biological role, second step of mRNA capping. Transfer of the GMP moiety of GTP to the 5'-end of RNA via an enzyme-GMP covalent reaction intermediate. This is mRNA-capping enzyme subunit alpha (CEG1) from Kluyveromyces lactis (strain ATCC 8585 / CBS 2359 / DSM 70799 / NBRC 1267 / NRRL Y-1140 / WM37) (Yeast).